The chain runs to 430 residues: Probable sugar isomerase R00627 (430 aa).

3 residues coordinate Mn(2+): His257, Asp289, and Asp291.

The protein belongs to the rhamnose isomerase family. Requires Mn(2+) as cofactor.

This chain is Probable sugar isomerase R00627, found in Rhizobium meliloti (strain 1021) (Ensifer meliloti).